An 87-amino-acid chain; its full sequence is Cell division topological specificity factor (87 aa).

This sequence belongs to the MinE family.

Functionally, prevents the cell division inhibition by proteins MinC and MinD at internal division sites while permitting inhibition at polar sites. This ensures cell division at the proper site by restricting the formation of a division septum at the midpoint of the long axis of the cell. In Rhizobium meliloti (strain 1021) (Ensifer meliloti), this protein is Cell division topological specificity factor.